A 227-amino-acid chain; its full sequence is Cytidylate kinase (227 aa).

12-20 (GPSGAGKGT) serves as a coordination point for ATP.

Belongs to the cytidylate kinase family. Type 1 subfamily.

Its subcellular location is the cytoplasm. It catalyses the reaction CMP + ATP = CDP + ADP. The enzyme catalyses dCMP + ATP = dCDP + ADP. In Xanthomonas oryzae pv. oryzae (strain PXO99A), this protein is Cytidylate kinase.